Here is a 286-residue protein sequence, read N- to C-terminus: NAD kinase (286 aa).

The active-site Proton acceptor is D67. NAD(+)-binding positions include 67 to 68 (DG), R72, 141 to 142 (ND), R152, D171, 182 to 187 (TAYSLS), and Q242.

This sequence belongs to the NAD kinase family. A divalent metal cation is required as a cofactor.

The protein localises to the cytoplasm. It catalyses the reaction NAD(+) + ATP = ADP + NADP(+) + H(+). Involved in the regulation of the intracellular balance of NAD and NADP, and is a key enzyme in the biosynthesis of NADP. Catalyzes specifically the phosphorylation on 2'-hydroxyl of the adenosine moiety of NAD to yield NADP. In Ruminiclostridium cellulolyticum (strain ATCC 35319 / DSM 5812 / JCM 6584 / H10) (Clostridium cellulolyticum), this protein is NAD kinase.